The chain runs to 65 residues: Large ribosomal subunit protein bL35 (65 aa).

It belongs to the bacterial ribosomal protein bL35 family.

In Aliarcobacter butzleri (strain RM4018) (Arcobacter butzleri), this protein is Large ribosomal subunit protein bL35.